Here is a 180-residue protein sequence, read N- to C-terminus: Large ribosomal subunit protein uL18m (180 aa).

The protein belongs to the universal ribosomal protein uL18 family. Component of the mitochondrial ribosome large subunit (39S) which comprises a 16S rRNA and about 50 distinct proteins.

The protein localises to the mitochondrion. In terms of biological role, together with thiosulfate sulfurtransferase (TST), acts as a mitochondrial import factor for the cytosolic 5S rRNA. The precursor form shows RNA chaperone activity; is able to fold the 5S rRNA into an import-competent conformation that is recognized by rhodanese (TST). Both the cytoplasmic and mitochondrial forms are able to bind to the helix IV-loop D in the gamma domain of the 5S rRNA. This Bos taurus (Bovine) protein is Large ribosomal subunit protein uL18m (MRPL18).